The following is a 592-amino-acid chain: Bifunctional purine biosynthesis protein ATIC (592 aa).

Methionine 1 carries the post-translational modification N-acetylmethionine. Residues 2–146 (APGQLALFSV…KNHARVTVVC (145 aa)) form the MGS-like domain. An IMP cyclohydrolase region spans residues 2 to 198 (APGQLALFSV…ISDYFRKQYS (197 aa)). IMP-binding positions include 12 to 14 (SDK), 34 to 37 (SGGT), 64 to 67 (RVKT), 101 to 102 (CN), and 125 to 126 (DI). Lysine 137 (proton donor/acceptor; for FAICAR cyclization activity) is an active-site residue. Lysine 199 is subject to N6-acetyllysine. The segment at 199 to 592 (KGVSQMPLRY…AHTNLRLFHH (394 aa)) is AICAR formyltransferase. 5-amino-1-(5-phospho-beta-D-ribosyl)imidazole-4-carboxamide-binding positions include 207–208 (RY), histidine 267, glycine 316, aspartate 339, asparagine 431, and arginine 451. Residue histidine 267 is the Proton acceptor; for AICAR formyltransferase activity of the active site. A (6R)-10-formyltetrahydrofolate-binding site is contributed by isoleucine 452. Phenylalanine 541 is a 5-amino-1-(5-phospho-beta-D-ribosyl)imidazole-4-carboxamide binding site. (6R)-10-formyltetrahydrofolate-binding positions include aspartate 546 and 565–566 (SA). Position 588 (arginine 588) interacts with 5-amino-1-(5-phospho-beta-D-ribosyl)imidazole-4-carboxamide.

Belongs to the PurH family. Homodimer. Associates with internalized INSR complexes on Golgi/endosomal membranes. Interacts with INSR; ATIC together with PRKAA2/AMPK2 and HACD3/PTPLAD1 is proposed to be part of a signaling network regulating INSR autophosphorylation and endocytosis. As to expression, present in the heart, brain, placenta, lung, liver, skeletal muscle, kidney, pancreas.

The protein resides in the cytoplasm. Its subcellular location is the cytosol. The enzyme catalyses (6R)-10-formyltetrahydrofolate + 5-amino-1-(5-phospho-beta-D-ribosyl)imidazole-4-carboxamide = 5-formamido-1-(5-phospho-D-ribosyl)imidazole-4-carboxamide + (6S)-5,6,7,8-tetrahydrofolate. It catalyses the reaction 10-formyldihydrofolate + 5-amino-1-(5-phospho-beta-D-ribosyl)imidazole-4-carboxamide = 5-formamido-1-(5-phospho-D-ribosyl)imidazole-4-carboxamide + 7,8-dihydrofolate. It carries out the reaction IMP + H2O = 5-formamido-1-(5-phospho-D-ribosyl)imidazole-4-carboxamide. The catalysed reaction is 5-amino-1-(5-phospho-D-ribosyl)imidazole-4-thiocarboxamide + 10-formyldihydrofolate = 6-thio-IMP + 7,8-dihydrofolate + H2O. Its pathway is purine metabolism; IMP biosynthesis via de novo pathway; 5-formamido-1-(5-phospho-D-ribosyl)imidazole-4-carboxamide from 5-amino-1-(5-phospho-D-ribosyl)imidazole-4-carboxamide (10-formyl THF route): step 1/1. It functions in the pathway purine metabolism; IMP biosynthesis via de novo pathway; IMP from 5-formamido-1-(5-phospho-D-ribosyl)imidazole-4-carboxamide: step 1/1. Its activity is regulated as follows. AMP and XMP inhibit AICAR formyltransferase activity. AICAR formyltransferase activity is inhibited by N-(6-fluoro-1-oxo-1,2-dihydroisoquinolin-7-yl)-5- [(3R)-3-hydroxypyrrolidin-1-yl]thiophene-2-sulfonamide (LSN 3213128), which acts as a tumor suppression in cancer cell lines. Its function is as follows. Bifunctional enzyme that catalyzes the last two steps of purine biosynthesis. Acts as a transformylase that incorporates a formyl group to the AMP analog AICAR (5-amino-1-(5-phospho-beta-D-ribosyl)imidazole-4-carboxamide) to produce the intermediate formyl-AICAR (FAICAR). Can use both 10-formyldihydrofolate and 10-formyltetrahydrofolate as the formyl donor in this reaction. Also catalyzes the cyclization of FAICAR to inosine monophosphate (IMP). Is able to convert thio-AICAR to 6-mercaptopurine ribonucleotide, an inhibitor of purine biosynthesis used in the treatment of human leukemias. Promotes insulin receptor/INSR autophosphorylation and is involved in INSR internalization. The chain is Bifunctional purine biosynthesis protein ATIC from Homo sapiens (Human).